A 564-amino-acid chain; its full sequence is Dihydropyrimidinase-related protein 5 (564 aa).

Thr509 and Thr514 each carry phosphothreonine. Residues Ser532 and Ser538 each carry the phosphoserine modification. Arg559 is modified (omega-N-methylarginine).

Belongs to the metallo-dependent hydrolases superfamily. Hydantoinase/dihydropyrimidinase family. As to quaternary structure, homotetramer, and heterotetramer with other DPYS-like proteins. Interacts with DPYSL2, DPYSL3 and DPYSL4. Interacts with SEPTIN4 isoform 4. Interacts with MAP2 and TUBB3. Detected in brain.

The protein localises to the cytoplasm. Involved in the negative regulation of dendrite outgrowth. This is Dihydropyrimidinase-related protein 5 (Dpysl5) from Mus musculus (Mouse).